The following is a 145-amino-acid chain: Basic phospholipase A2 beta-bungarotoxin A2 chain (145 aa).

The N-terminal stretch at 1–17 (MLIFLWCGAVCVSLLGA) is a signal peptide. A propeptide spanning residues 18 to 25 (ANIPPHPL) is cleaved from the precursor. Disulfide bonds link cysteine 52–cysteine 144, cysteine 54–cysteine 70, cysteine 69–cysteine 125, cysteine 76–cysteine 118, cysteine 86–cysteine 111, and cysteine 104–cysteine 116. Residues tyrosine 53, glycine 55, and glycine 57 each coordinate Ca(2+). Residue histidine 73 is part of the active site. Aspartate 74 is a binding site for Ca(2+). Aspartate 119 is a catalytic residue.

The protein belongs to the phospholipase A2 family. Group I subfamily. D49 sub-subfamily. Heterodimer; disulfide-linked. The A chains have phospholipase A2 activity and the B chains show homology with the basic protease inhibitors. The A2 chain is found in beta-3 and beta-4 bungarotoxins. It depends on Ca(2+) as a cofactor. Expressed by the venom gland.

Its subcellular location is the secreted. It catalyses the reaction a 1,2-diacyl-sn-glycero-3-phosphocholine + H2O = a 1-acyl-sn-glycero-3-phosphocholine + a fatty acid + H(+). Snake venom phospholipase A2 (PLA2) that inhibits neuromuscular transmission by blocking acetylcholine release from the nerve termini. PLA2 catalyzes the calcium-dependent hydrolysis of the 2-acyl groups in 3-sn-phosphoglycerides. The sequence is that of Basic phospholipase A2 beta-bungarotoxin A2 chain from Bungarus multicinctus (Many-banded krait).